The chain runs to 815 residues: TBC1 domain family member 5 (815 aa).

S44 is subject to Phosphoserine. Residues 56-64 (MKEWEELFV) are required for interaction with retromer; involved in interaction with ATG8 family proteins. Positions 57–62 (KEWEEL) match the LIR 1 motif. Residues 81–359 (LRSSRFRSIC…VVWDALFADS (279 aa)) enclose the Rab-GAP TBC domain. R448 carries the asymmetric dimethylarginine; alternate modification. R448 carries the omega-N-methylarginine; alternate modification. S460 is modified (phosphoserine). The tract at residues 475–591 (PGSMGGPVPG…SATKKDSFFS (117 aa)) is disordered. 2 stretches are compositionally biased toward low complexity: residues 483–492 (PGNNSSSSFS) and 510–539 (QQQQQQQHQQQQQQQPQQQQQQHQQQQQQQ). A phosphoserine mark is found at S546, S563, S565, S568, S578, and S608. Low complexity predominate over residues 556-568 (SSKTISSSPSIES). 2 disordered regions span residues 702-733 (SGQDQGSQVPRAAKQASSEMPGCTGGTTPDDF) and 754-815 (QPLL…PLDI). Over residues 754 to 765 (QPLLTLRSTSGK) the composition is skewed to polar residues. Residues 783 to 796 (PASASASSSNPSSS) show a composition bias toward low complexity. Residues 805–809 (SGFTI) carry the LIR 2 motif. Residues 806 to 811 (GFTIVS) are required for interaction with ATG8 family proteins. S811 carries the phosphoserine modification.

In terms of assembly, interacts with MAP1LC3A, MAP1LC3B, MAP1LC3C, GABARAP, GABARAPL1, GABARAPL2. Interacts with VPS29 and VPS35; indicative for an association with retromer CSC subcomplex. MAP1LC3A and VPS29 compete for binding to TBC1D5. Interacts with AP2M1; indicative for an association with the AP2 complex. Interacts with ULK1 and ATG13 (phosphorylated); indicative for an association with the activated ULK1-ATG13-FIP200 complex. Interacts with ATG9A; the interactions seems to be restricted to the AP2-clathrin-associated fraction of ATG9A.

Its subcellular location is the endosome membrane. The protein localises to the cytoplasmic vesicle. It localises to the autophagosome. Functionally, may act as a GTPase-activating protein for Rab family protein(s). May act as a GAP for RAB7A. Can displace RAB7A and retromer CSC subcomplex from the endosomal membrane to the cytosol; at least retromer displacement seems to require its catalytic activity. Required for retrograde transport of cargo proteins from endosomes to the trans-Golgi network (TGN); the function seems to require its catalytic activity. Involved in regulation of autophagy. May act as a molecular switch between endosomal and autophagosomal transport and is involved in reprogramming vesicle trafficking upon autophagy induction. Involved in the trafficking of ATG9A upon activation of autophagy. May regulate the recruitment of ATG9A-AP2-containing vesicles to autophagic membranes. In Mus musculus (Mouse), this protein is TBC1 domain family member 5 (Tbc1d5).